The sequence spans 292 residues: Ventral anterior homeobox 2 (292 aa).

Basic and acidic residues predominate over residues 1–36 (MGDGGAERDRGPKRREEPGGRSGCRGEHRGAEDLRA). The tract at residues 1–74 (MGDGGAERDR…DGQQALGETD (74 aa)) is disordered. Residues 38 to 55 (TGSTSPREIAGTSASSPA) show a composition bias toward polar residues. A DNA-binding region (homeobox) is located at residues 102–161 (PKRTRTSFTAEQLYRLEMEFQRCQYVVGRERTELARQLNLSETQVKVWFQNRRTKQKKDQ). The tract at residues 212–241 (AGHRGTSLGDPRNSSQRLNPMPSASASSPL) is disordered.

Belongs to the EMX homeobox family.

Its subcellular location is the nucleus. In terms of biological role, transcription factor that may function in dorsoventral specification of the forebrain. Regulates the expression of Wnt signaling antagonists including the expression of a truncated TCF7L2 isoform that cannot bind CTNNB1 and acts therefore as a potent dominant-negative Wnt antagonist. Plays a crucial role in eye development and, in particular, in the specification of the ventral optic vesicle. May be a regulator of axial polarization in the retina. The sequence is that of Ventral anterior homeobox 2 (Vax2) from Rattus norvegicus (Rat).